A 411-amino-acid polypeptide reads, in one-letter code: SH3 and cysteine-rich domain-containing protein 2 (411 aa).

Residues Met1–Thr29 are disordered. Polar residues predominate over residues Pro19–Thr29. Phosphoserine is present on Ser48. Residues Thr64–Pro95 are disordered. Residues Pro70 to Thr82 are compositionally biased toward pro residues. Residues Leu110–Cys161 form a Phorbol-ester/DAG-type zinc finger. Disordered stretches follow at residues Ser174–Pro203 and Arg219–Arg288. The segment covering Arg219 to Ser232 has biased composition (low complexity). SH3 domains are found at residues Gly292–Pro351 and Asn354–Ile411.

In terms of assembly, interacts (via SH3 domains) with CACNA1S. Interacts (via SH3 domains) with CACNA1C. Has much lower affinity for CACNA1C than for CACNA1S.

It is found in the cytoplasm. The protein resides in the cytosol. The protein localises to the cell membrane. It localises to the sarcolemma. In terms of biological role, plays a redundant role in promoting the expression of calcium channel CACNA1S at the cell membrane, and thereby contributes to increased channel activity. Slows down the inactivation rate of the calcium channel CACNA1C. The sequence is that of SH3 and cysteine-rich domain-containing protein 2 (STAC2) from Homo sapiens (Human).